The primary structure comprises 388 residues: Succinate--CoA ligase [ADP-forming] subunit beta (388 aa).

The 236-residue stretch at 9-244 (KEILRKFGVA…LDEEDPAEIE (236 aa)) folds into the ATP-grasp domain. ATP is bound by residues Lys-46, 53–55 (GRG), Glu-99, Ala-102, and Glu-107. Residues Asn-199 and Asp-213 each coordinate Mg(2+). Substrate-binding positions include Asn-264 and 321 to 323 (GIM).

This sequence belongs to the succinate/malate CoA ligase beta subunit family. Heterotetramer of two alpha and two beta subunits. Mg(2+) serves as cofactor.

The catalysed reaction is succinate + ATP + CoA = succinyl-CoA + ADP + phosphate. It catalyses the reaction GTP + succinate + CoA = succinyl-CoA + GDP + phosphate. It participates in carbohydrate metabolism; tricarboxylic acid cycle; succinate from succinyl-CoA (ligase route): step 1/1. Its function is as follows. Succinyl-CoA synthetase functions in the citric acid cycle (TCA), coupling the hydrolysis of succinyl-CoA to the synthesis of either ATP or GTP and thus represents the only step of substrate-level phosphorylation in the TCA. The beta subunit provides nucleotide specificity of the enzyme and binds the substrate succinate, while the binding sites for coenzyme A and phosphate are found in the alpha subunit. The protein is Succinate--CoA ligase [ADP-forming] subunit beta of Burkholderia mallei (strain NCTC 10247).